The sequence spans 29 residues: Cycloviolacin-H2 (29 aa).

Residues 1–29 (SAIACGESCVYIPCFIPGCSCRNRVCYLN) constitute a cross-link (cyclopeptide (Ser-Asn)). 3 disulfide bridges follow: C5/C19, C9/C21, and C14/C26.

Post-translationally, this is a cyclic peptide.

Functionally, probably participates in a plant defense mechanism. The chain is Cycloviolacin-H2 from Viola hederacea (Australian violet).